The primary structure comprises 88 residues: Small ribosomal subunit protein bS20 (88 aa).

Positions 1 to 11 are enriched in basic and acidic residues; it reads MANIKSSEKDI. Disordered stretches follow at residues 1-31 and 69-88; these read MANI…LRTQ and SKNA…SSAA.

Belongs to the bacterial ribosomal protein bS20 family.

Functionally, binds directly to 16S ribosomal RNA. The protein is Small ribosomal subunit protein bS20 of Leptospira interrogans serogroup Icterohaemorrhagiae serovar copenhageni (strain Fiocruz L1-130).